The sequence spans 173 residues: Crossover junction endodeoxyribonuclease RuvC (173 aa).

Active-site residues include Asp8, Glu67, and Asp139. Residues Asp8, Glu67, and Asp139 each coordinate Mg(2+).

The protein belongs to the RuvC family. As to quaternary structure, homodimer which binds Holliday junction (HJ) DNA. The HJ becomes 2-fold symmetrical on binding to RuvC with unstacked arms; it has a different conformation from HJ DNA in complex with RuvA. In the full resolvosome a probable DNA-RuvA(4)-RuvB(12)-RuvC(2) complex forms which resolves the HJ. The cofactor is Mg(2+).

It localises to the cytoplasm. It carries out the reaction Endonucleolytic cleavage at a junction such as a reciprocal single-stranded crossover between two homologous DNA duplexes (Holliday junction).. Functionally, the RuvA-RuvB-RuvC complex processes Holliday junction (HJ) DNA during genetic recombination and DNA repair. Endonuclease that resolves HJ intermediates. Cleaves cruciform DNA by making single-stranded nicks across the HJ at symmetrical positions within the homologous arms, yielding a 5'-phosphate and a 3'-hydroxyl group; requires a central core of homology in the junction. The consensus cleavage sequence is 5'-(A/T)TT(C/G)-3'. Cleavage occurs on the 3'-side of the TT dinucleotide at the point of strand exchange. HJ branch migration catalyzed by RuvA-RuvB allows RuvC to scan DNA until it finds its consensus sequence, where it cleaves and resolves the cruciform DNA. This chain is Crossover junction endodeoxyribonuclease RuvC, found in Aliivibrio fischeri (strain ATCC 700601 / ES114) (Vibrio fischeri).